The following is a 521-amino-acid chain: Importin subunit alpha-3 (521 aa).

The residue at position 2 (alanine 2) is an N-acetylalanine. An IBB domain is found at 2–58 (ADNEKLDNQRLKNFKNKGRDLETMRRQRNEVVVELRKNKRDEHLLKRRNVPHEDICE). Residues 43-52 (EHLLKRRNVP) carry the Nuclear localization signal motif. The residue at position 60 (serine 60) is a Phosphoserine. An ARM 1; truncated repeat occupies 66–106 (YRVQNTSLEAIVQNASSDNQGIQLSAVQAARKLLSSDRNPP). ARM repeat units lie at residues 107–149 (IDDL…TSEQ), 150–194 (TQAV…CRDY), 195–233 (VISLGVVKPLLSFISPSIPITFLRNVTWVMVNLCRHKDP), 234–278 (PPPM…EQIQ), 279–318 (MVIDSGIVPHLVPLLSHQEVKVQTAALRAVGNIVTGTDEQ), 319–360 (TQVV…NQQQ), 361–400 (VQAVIDANLVPMIIHLLDKGDFGTQKEAAWAISNLTISGR), and 401–443 (KDQV…KMAE). Residues 137 to 229 (WALTNIASGT…VTWVMVNLCR (93 aa)) are NLS binding site (major). Residues 306–394 (RAVGNIVTGT…QKEAAWAISN (89 aa)) form an NLS binding site (minor) region. Residues 447-485 (ETIGNLIEECGGLEKIEQLQNHENEDIYKLAYEIIDQFF) form an ARM 10; atypical repeat.

Belongs to the importin alpha family. As to quaternary structure, forms a complex with importin subunit beta-1 (KPNB1). Interacts with SNAI1. Interacts with TALDO1 isoform 1. Interacts with CYB1. In terms of assembly, (Microbial infection) Interacts with MERS virus protein OF4b; this interaction prevents the translocation of NF-kappa-B complex to the nucleus. (Microbial infection) Interacts with human adenovirus 5 E1A protein; this interaction allows E1A import into the host nucleus. As to quaternary structure, (Microbial infection) Interacts with Chikungunya virus capsid protein; this interaction allows the nuclear import of the viral capsid protein. Highly expressed in testis, ovary, small intestine, heart, skeletal muscle, lung and pancreas, but barely detectable in kidney, thymus, colon and peripheral blood leukocytes.

The protein resides in the cytoplasm. Its subcellular location is the nucleus. Functions in nuclear protein import as an adapter protein for nuclear receptor KPNB1. Binds specifically and directly to substrates containing either a simple or bipartite NLS motif. Docking of the importin/substrate complex to the nuclear pore complex (NPC) is mediated by KPNB1 through binding to nucleoporin FxFG repeats and the complex is subsequently translocated through the pore by an energy requiring, Ran-dependent mechanism. At the nucleoplasmic side of the NPC, Ran binds to importin-beta and the three components separate and importin-alpha and -beta are re-exported from the nucleus to the cytoplasm where GTP hydrolysis releases Ran from importin. The directionality of nuclear import is thought to be conferred by an asymmetric distribution of the GTP- and GDP-bound forms of Ran between the cytoplasm and nucleus. Mediates nuclear import of AARS1, MRTFA and RANBP3. In terms of biological role, (Microbial infection) In vitro, mediates the nuclear import of human cytomegalovirus UL84 by recognizing a non-classical NLS. In vitro, mediates the nuclear import of human cytomegalovirus UL84 by recognizing a non-classical NLS. In Homo sapiens (Human), this protein is Importin subunit alpha-3.